Reading from the N-terminus, the 359-residue chain is tRNA-specific 2-thiouridylase MnmA (359 aa).

Residues 9–16 (GMSGGVDS) and methionine 35 contribute to the ATP site. Cysteine 104 (nucleophile) is an active-site residue. Cysteine 104 and cysteine 200 are disulfide-bonded. Position 128 (glycine 128) interacts with ATP. The interaction with tRNA stretch occupies residues 150 to 152 (KDQ). Cysteine 200 acts as the Cysteine persulfide intermediate in catalysis. Positions 306 to 307 (RY) are interaction with tRNA.

It belongs to the MnmA/TRMU family.

The protein localises to the cytoplasm. The catalysed reaction is S-sulfanyl-L-cysteinyl-[protein] + uridine(34) in tRNA + AH2 + ATP = 2-thiouridine(34) in tRNA + L-cysteinyl-[protein] + A + AMP + diphosphate + H(+). Its function is as follows. Catalyzes the 2-thiolation of uridine at the wobble position (U34) of tRNA, leading to the formation of s(2)U34. The sequence is that of tRNA-specific 2-thiouridylase MnmA from Clostridium perfringens (strain ATCC 13124 / DSM 756 / JCM 1290 / NCIMB 6125 / NCTC 8237 / Type A).